The primary structure comprises 446 residues: Na(+)-translocating NADH-quinone reductase subunit A (446 aa).

Belongs to the NqrA family. In terms of assembly, composed of six subunits; NqrA, NqrB, NqrC, NqrD, NqrE and NqrF.

The enzyme catalyses a ubiquinone + n Na(+)(in) + NADH + H(+) = a ubiquinol + n Na(+)(out) + NAD(+). In terms of biological role, NQR complex catalyzes the reduction of ubiquinone-1 to ubiquinol by two successive reactions, coupled with the transport of Na(+) ions from the cytoplasm to the periplasm. NqrA to NqrE are probably involved in the second step, the conversion of ubisemiquinone to ubiquinol. In Histophilus somni (strain 2336) (Haemophilus somnus), this protein is Na(+)-translocating NADH-quinone reductase subunit A.